The primary structure comprises 166 residues: MIYIDNRQNKIKVNEELENKIKEIIDYALKEEKVNIDYEISVVFIDNNSIKEINKDYRNIDKATDVLSFPMLDYEEGKVFKDIYLNYEFDESDLDEGNLVLGDIALSLEKAEEQSKEFGHSFLRETCYLTIHSVLHLLGYDHMEEDEKVIMRQREEEILKSFNLHR.

Positions 132, 136, and 142 each coordinate Zn(2+).

This sequence belongs to the endoribonuclease YbeY family. Requires Zn(2+) as cofactor.

It localises to the cytoplasm. In terms of biological role, single strand-specific metallo-endoribonuclease involved in late-stage 70S ribosome quality control and in maturation of the 3' terminus of the 16S rRNA. This Clostridium botulinum (strain Langeland / NCTC 10281 / Type F) protein is Endoribonuclease YbeY.